The sequence spans 126 residues: Large ribosomal subunit protein bL17 (126 aa).

The protein belongs to the bacterial ribosomal protein bL17 family. Part of the 50S ribosomal subunit. Contacts protein L32.

This Aliivibrio fischeri (strain ATCC 700601 / ES114) (Vibrio fischeri) protein is Large ribosomal subunit protein bL17.